Consider the following 650-residue polypeptide: Acetyl-coenzyme A synthetase (650 aa).

CoA is bound by residues 191 to 194 (RGGR), Thr-311, and Asn-335. ATP is bound by residues 387 to 389 (GEP), 411 to 416 (DTWWQT), Asp-500, and Arg-515. Ser-523 contacts CoA. Arg-526 contacts ATP. Mg(2+)-binding residues include Val-537, His-539, and Val-542. Arg-584 provides a ligand contact to CoA. The residue at position 609 (Lys-609) is an N6-acetyllysine.

Belongs to the ATP-dependent AMP-binding enzyme family. Mg(2+) is required as a cofactor. In terms of processing, acetylated. Deacetylation by the SIR2-homolog deacetylase activates the enzyme.

It catalyses the reaction acetate + ATP + CoA = acetyl-CoA + AMP + diphosphate. Its function is as follows. Catalyzes the conversion of acetate into acetyl-CoA (AcCoA), an essential intermediate at the junction of anabolic and catabolic pathways. AcsA undergoes a two-step reaction. In the first half reaction, AcsA combines acetate with ATP to form acetyl-adenylate (AcAMP) intermediate. In the second half reaction, it can then transfer the acetyl group from AcAMP to the sulfhydryl group of CoA, forming the product AcCoA. The protein is Acetyl-coenzyme A synthetase of Shewanella sp. (strain W3-18-1).